Consider the following 597-residue polypeptide: Membrane protein insertase YidC (597 aa).

The chain crosses the membrane as a helical span at residues Y8–S28. A disordered region spans residues A38–S75. Positions A41 to P70 are enriched in low complexity. Helical transmembrane passes span L372–F392, W446–I466, L491–V511, and F535–I555.

It belongs to the OXA1/ALB3/YidC family. Type 1 subfamily. In terms of assembly, interacts with the Sec translocase complex via SecD. Specifically interacts with transmembrane segments of nascent integral membrane proteins during membrane integration.

It is found in the cell inner membrane. Its function is as follows. Required for the insertion and/or proper folding and/or complex formation of integral membrane proteins into the membrane. Involved in integration of membrane proteins that insert both dependently and independently of the Sec translocase complex, as well as at least some lipoproteins. Aids folding of multispanning membrane proteins. This chain is Membrane protein insertase YidC, found in Sinorhizobium medicae (strain WSM419) (Ensifer medicae).